A 132-amino-acid chain; its full sequence is MAVNDPLGDMLTRIRNAQMRRKGKVQTPGSRLRAHVLDVLQEEGYIRGYSTTEYGNGRSEFEIELKYFDGLPVIREIQRVSKPGRRVYTAVNAIPRVANGLGISIISTPKGVMADHAAREANVGGEVLCKVF.

Belongs to the universal ribosomal protein uS8 family. As to quaternary structure, part of the 30S ribosomal subunit. Contacts proteins S5 and S12.

Its function is as follows. One of the primary rRNA binding proteins, it binds directly to 16S rRNA central domain where it helps coordinate assembly of the platform of the 30S subunit. The chain is Small ribosomal subunit protein uS8 from Beijerinckia indica subsp. indica (strain ATCC 9039 / DSM 1715 / NCIMB 8712).